The primary structure comprises 308 residues: Ornithine carbamoyltransferase (308 aa).

Residues 56-59 (STRT), Gln83, Arg107, and 134-137 (HPCQ) contribute to the carbamoyl phosphate site. L-ornithine is bound by residues Asn165, Asp225, and 229-230 (SM). Residues 266–267 (CL) and Arg294 each bind carbamoyl phosphate.

It belongs to the aspartate/ornithine carbamoyltransferase superfamily. OTCase family.

It localises to the cytoplasm. It catalyses the reaction carbamoyl phosphate + L-ornithine = L-citrulline + phosphate + H(+). The protein operates within amino-acid biosynthesis; L-arginine biosynthesis; L-arginine from L-ornithine and carbamoyl phosphate: step 1/3. Its function is as follows. Reversibly catalyzes the transfer of the carbamoyl group from carbamoyl phosphate (CP) to the N(epsilon) atom of ornithine (ORN) to produce L-citrulline. The polypeptide is Ornithine carbamoyltransferase (Roseobacter denitrificans (strain ATCC 33942 / OCh 114) (Erythrobacter sp. (strain OCh 114))).